Here is a 262-residue protein sequence, read N- to C-terminus: Cutinase 2 (262 aa).

Tyr-61 is a binding site for poly(ethylene terephthalate). Ser-131 serves as the catalytic Nucleophile. 2 residues coordinate poly(ethylene terephthalate): Met-132 and Trp-156. Residues Asp-177 and His-209 each act as charge relay system in the active site. Cysteines 242 and 260 form a disulfide.

The protein belongs to the AB hydrolase superfamily.

The protein localises to the secreted. It is found in the periplasm. The enzyme catalyses a butanoate ester + H2O = an aliphatic alcohol + butanoate + H(+). It catalyses the reaction an acetyl ester + H2O = an aliphatic alcohol + acetate + H(+). It carries out the reaction (ethylene terephthalate)(n) + H2O = (ethylene terephthalate)(n-1) + 4-[(2-hydroxyethoxy)carbonyl]benzoate + H(+). The catalysed reaction is cutin + H2O = cutin monomers.. Functionally, catalyzes the hydrolysis of cutin, a polyester that forms the structure of plant cuticle. Shows esterase activity towards p-nitrophenol-linked aliphatic esters (pNP-aliphatic esters). Capable of degrading the plastic poly(ethylene terephthalate) (PET), the most abundant polyester plastic in the world. Capable of degrading the bioplastic poly(lactic acid) (PLLA). This chain is Cutinase 2, found in Thermobifida cellulosilytica.